Consider the following 72-residue polypeptide: Probable transcription factor elt-4 (72 aa).

The GATA-type zinc finger occupies 16–40; that stretch reads CSNCNGTNTTLWRRKAEGDPVCNAC.

It localises to the nucleus. Functionally, probable transcription factor. Plays a role in regulating heme-dependent expression of heme transporter hrg-1. Modulates lifespan in a daf-16-dependent manner. In Caenorhabditis elegans, this protein is Probable transcription factor elt-4.